The primary structure comprises 204 residues: bMERB domain-containing protein 1 (204 aa).

Residues 3–150 (LKQSLSTHLE…EQEEDKEMAD (148 aa)) enclose the bMERB domain. Positions 162–187 (VTKSPASSRAEKKAEPPPSKPTVAKT) are disordered.

The chain is bMERB domain-containing protein 1 (BMERB1) from Pongo abelii (Sumatran orangutan).